The primary structure comprises 245 residues: Exosome complex component RRP41 (245 aa).

A2 carries the N-acetylalanine modification.

It belongs to the RNase PH family. In terms of assembly, component of the RNA exosome core complex (Exo-9), composed of EXOSC1, EXOSC2, EXOSC3, EXOSC4, EXOSC5, EXOSC6, EXOSC7, EXOSC8 and EXOSC9; within the complex interacts with EXOSC2, EXOSC7 and EXOSC9. The catalytically inactive RNA exosome core complex (Exo-9) associates with the catalytic subunit EXOSC10/RRP6. Exo-9 may associate with DIS3 to form the nucleolar exosome complex, or DIS3L to form the cytoplasmic exosome complex. Exo-9 is formed by a hexameric base ring consisting of the heterodimers EXOSC4-EXOSC9, EXOSC5-EXOSC8 and EXOSC6-EXOSC7, and a cap ring consisting of EXOSC1, EXOSC2 and EXOSC3. The RNA exosome complex associates with cofactors C1D/RRP47, MPHOSPH6/MPP6 and MTREX/MTR4. Interacts with DDX60. Interacts with DIS3; the interaction is direct.

It localises to the cytoplasm. It is found in the nucleus. The protein localises to the nucleolus. Its subcellular location is the nucleoplasm. In terms of biological role, non-catalytic component of the RNA exosome complex which has 3'-&gt;5' exoribonuclease activity and participates in a multitude of cellular RNA processing and degradation events. In the nucleus, the RNA exosome complex is involved in proper maturation of stable RNA species such as rRNA, snRNA and snoRNA, in the elimination of RNA processing by-products and non-coding 'pervasive' transcripts, such as antisense RNA species and promoter-upstream transcripts (PROMPTs), and of mRNAs with processing defects, thereby limiting or excluding their export to the cytoplasm. The RNA exosome may be involved in Ig class switch recombination (CSR) and/or Ig variable region somatic hypermutation (SHM) by targeting AICDA deamination activity to transcribed dsDNA substrates. In the cytoplasm, the RNA exosome complex is involved in general mRNA turnover and specifically degrades inherently unstable mRNAs containing AU-rich elements (AREs) within their 3' untranslated regions, and in RNA surveillance pathways, preventing translation of aberrant mRNAs. It seems to be involved in degradation of histone mRNA. The catalytic inactive RNA exosome core complex of 9 subunits (Exo-9) is proposed to play a pivotal role in the binding and presentation of RNA for ribonucleolysis, and to serve as a scaffold for the association with catalytic subunits and accessory proteins or complexes. EXOSC4 binds to ARE-containing RNAs. The protein is Exosome complex component RRP41 (EXOSC4) of Homo sapiens (Human).